The primary structure comprises 826 residues: Lethal(3)malignant brain tumor-like protein 1 (826 aa).

Serine 136 carries the phosphoserine modification. 2 disordered regions span residues 167-197 and 220-271; these read LEPPVDASSCKCQACGPQQSSGLDVGSSGDR and LLKP…RSQL. The segment covering 242 to 256 has biased composition (basic and acidic residues); sequence EAVKQGEGKDAEREP. MBT repeat units follow at residues 280 to 380, 388 to 487, and 496 to 591; these read WSWE…LQLP, FSWS…LTPP, and FCWE…LEPP. Residues 453-460 form an interaction with monomethylated and dimethylated peptides region; it reads FDDWGDTY. Residues 586-621 are disordered; it reads HPLEPPLRPRESSSVSPGGCPPLSHRSPPHTKTSKY. Over residues 612–621 the composition is skewed to basic residues; it reads SPPHTKTSKY. The segment at 619–662 adopts a CCHHC-type zinc-finger fold; it reads SKYNFHHRKCPTPGCDGSGHVTGKFTAHHCLSGCPLAEKNQSRL. Zn(2+) is bound by residues cysteine 628, cysteine 633, histidine 646, and cysteine 652. A disordered region spans residues 663-699; it reads KAELSDSETAARKKNPSNLSPRKKPRHQGRIGRPPKY. The segment covering 683-699 has biased composition (basic residues); that stretch reads PRKKPRHQGRIGRPPKY. The SAM domain maps to 757–821; sequence WTIEEVFGFV…YNAILMFKNT (65 aa).

Homodimer. Interacts with RB1/RB (when monomethylated at 'Lys-860'). Interacts with p53/TP53 (when monomethylated at 'Lys-382'). Interacts with CBX3, ETV6, KMT5A and VCP/p97. In terms of processing, ubiquitinated in a VCP/p97-dependent way following DNA damage, leading to its removal from DNA damage sites, promoting accessibility of H4K20me2 mark for DNA repair protein TP53BP1, which is then recruited to DNA damage sites. As to expression, highly expressed in brain, testis, eyes, and ES cells.

The protein resides in the nucleus. Its function is as follows. Polycomb group (PcG) protein that specifically recognizes and binds mono- and dimethyllysine residues on target proteins, thereby acting as a 'reader' of a network of post-translational modifications. PcG proteins maintain the transcriptionally repressive state of genes: acts as a chromatin compaction factor by recognizing and binding mono- and dimethylated histone H1b/H1-4 at 'Lys-26' (H1bK26me1 and H1bK26me2) and histone H4 at 'Lys-20' (H4K20me1 and H4K20me2), leading to condense chromatin and repress transcription. Recognizes and binds p53/TP53 monomethylated at 'Lys-382', leading to repress p53/TP53-target genes. Also recognizes and binds RB1/RB monomethylated at 'Lys-860'. Participates in the ETV6-mediated repression. Probably plays a role in cell proliferation. Overexpression induces multinucleated cells, suggesting that it is required to accomplish normal mitosis. This is Lethal(3)malignant brain tumor-like protein 1 (L3mbtl1) from Mus musculus (Mouse).